We begin with the raw amino-acid sequence, 436 residues long: Gamma-glutamyl phosphate reductase (436 aa).

The protein belongs to the gamma-glutamyl phosphate reductase family.

The protein localises to the cytoplasm. It carries out the reaction L-glutamate 5-semialdehyde + phosphate + NADP(+) = L-glutamyl 5-phosphate + NADPH + H(+). It participates in amino-acid biosynthesis; L-proline biosynthesis; L-glutamate 5-semialdehyde from L-glutamate: step 2/2. Its function is as follows. Catalyzes the NADPH-dependent reduction of L-glutamate 5-phosphate into L-glutamate 5-semialdehyde and phosphate. The product spontaneously undergoes cyclization to form 1-pyrroline-5-carboxylate. The protein is Gamma-glutamyl phosphate reductase of Salinibacter ruber (strain DSM 13855 / M31).